The primary structure comprises 389 residues: GTPase Obg (389 aa).

Positions 1–159 (MKFVDEAVIK…RELRLELLLL (159 aa)) constitute an Obg domain. One can recognise an OBG-type G domain in the interval 160-333 (ADVGLLGMPN…LAEKLFDFIK (174 aa)). Residues 166–173 (GMPNAGKS), 191–195 (FTTLV), 213–216 (DIPG), 283–286 (NKTD), and 314–316 (SAA) each bind GTP. The Mg(2+) site is built by serine 173 and threonine 193.

Belongs to the TRAFAC class OBG-HflX-like GTPase superfamily. OBG GTPase family. Monomer. It depends on Mg(2+) as a cofactor.

It localises to the cytoplasm. In terms of biological role, an essential GTPase which binds GTP, GDP and possibly (p)ppGpp with moderate affinity, with high nucleotide exchange rates and a fairly low GTP hydrolysis rate. Plays a role in control of the cell cycle, stress response, ribosome biogenesis and in those bacteria that undergo differentiation, in morphogenesis control. This Shewanella amazonensis (strain ATCC BAA-1098 / SB2B) protein is GTPase Obg.